A 56-amino-acid chain; its full sequence is Attractin (56 aa).

Intrachain disulfides connect Cys4–Cys41, Cys13–Cys33, and Cys20–Cys26. Residue Asn25 is glycosylated (N-linked (GlcNAc...) asparagine).

As to expression, produced by the albumen gland of the egg cordons.

The protein resides in the secreted. Its function is as follows. Water-borne pheromone that attract the marine mollusk Aplysia into breeding aggregations and coordinate male and female reproductive behavior within the aggregation. The protein is Attractin (ATT) of Aplysia depilans (Sea hare).